Reading from the N-terminus, the 539-residue chain is Chaperonin GroEL (539 aa).

Residues 29–32 (TLGP), 86–90 (DGTTT), Gly-413, 477–479 (NAA), and Asp-493 contribute to the ATP site.

The protein belongs to the chaperonin (HSP60) family. As to quaternary structure, forms a cylinder of 14 subunits composed of two heptameric rings stacked back-to-back. Interacts with the co-chaperonin GroES.

The protein localises to the cytoplasm. It catalyses the reaction ATP + H2O + a folded polypeptide = ADP + phosphate + an unfolded polypeptide.. In terms of biological role, together with its co-chaperonin GroES, plays an essential role in assisting protein folding. The GroEL-GroES system forms a nano-cage that allows encapsulation of the non-native substrate proteins and provides a physical environment optimized to promote and accelerate protein folding. This chain is Chaperonin GroEL, found in Leifsonia xyli subsp. xyli (strain CTCB07).